A 121-amino-acid polypeptide reads, in one-letter code: MNLFEYKLSVVRQVMDKYEVAEEAKFISGLSKGSMVNALSRKKKLPNKEAKFTRYVIYTVDVERIIDMMEEPYRTVIKKRYYDASLDTVKKDFGLQNKREAYFLVKKSVNKFYDLLENYWK.

This is an uncharacterized protein from Aquifex aeolicus (strain VF5).